The primary structure comprises 272 residues: GPN-loop GTPase 3 (272 aa).

12–17 (GAGKST) is a binding site for GTP. The short motif at 69-71 (GPN) is the Gly-Pro-Asn (GPN)-loop; involved in dimer interface element. 172–175 (SKMD) contacts GTP. Residues 253 to 272 (QYGEDEEPKVPKDMDDGDFD) are disordered.

This sequence belongs to the GPN-loop GTPase family. In terms of assembly, heterodimers with GPN1 or GPN2. Binds to RNA polymerase II (RNAPII).

Small GTPase required for proper nuclear import of RNA polymerase II and III (RNAPII and RNAPIII). May act at an RNAP assembly step prior to nuclear import. In Cryptococcus neoformans var. neoformans serotype D (strain JEC21 / ATCC MYA-565) (Filobasidiella neoformans), this protein is GPN-loop GTPase 3.